Consider the following 68-residue polypeptide: Large ribosomal subunit protein bL31 (68 aa).

Positions 16, 18, 36, and 39 each coordinate Zn(2+).

It belongs to the bacterial ribosomal protein bL31 family. Type A subfamily. In terms of assembly, part of the 50S ribosomal subunit. Zn(2+) is required as a cofactor.

Functionally, binds the 23S rRNA. The protein is Large ribosomal subunit protein bL31 of Lachnospira eligens (strain ATCC 27750 / DSM 3376 / VPI C15-48 / C15-B4) (Eubacterium eligens).